A 470-amino-acid polypeptide reads, in one-letter code: MSNIYIQEPPTNGKVLLKTSAGDIDIELWSKETPKACRNFVQLCMEGYYDGTIFHRMVPEFIVQGGDPTGTGTGGESIYGRPFKDEFHSRLRFNRRGLVAMANAGPHDNGSQFFFTLGRADELNNKHTIFGKVTGDTVYNMLRLADVACDGDERPLNPHKIRSTEVLHSPFDDIIPREIKGKKEKNKDEAKKSQSKATKNFSLLSFGEEAEEDEEMVNQVSQTMKGKSKSSHDLLKDDPKLSSVPVVDRNQGEGDFEDSDDDEDDAEDDSDREAEKAKVRENIAKKLKKDKTDEEKSSQDLVKKTSRSDELRKEARQLKKELLAIKQRKEDGVKKEEDVSEVGDSKQNSEAVTEYLESRKKYDDMRKQKLKKGSGREAQTLALLESFKSKLSSAISETPSAPEEDVEELAEDDDKGWMAHVLHFDEQSRKVKDANMQDEDTFEIYDPRNPVNKRRREESKKLLKDKKARR.

The 156-residue stretch at Thr-11–Val-166 folds into the PPIase cyclophilin-type domain. 2 stretches are compositionally biased toward basic and acidic residues: residues Asp-172–Lys-192 and Ser-230–Lys-240. Disordered stretches follow at residues Asp-172–Glu-377 and Ser-428–Arg-470. The span at Gly-254 to Arg-272 shows a compositional bias: acidic residues. 2 stretches are compositionally biased toward basic and acidic residues: residues Glu-273–Glu-337 and Leu-356–Lys-367. Positions Glu-281–Gly-332 form a coiled coil.

Belongs to the cyclophilin-type PPIase family. As to quaternary structure, part of the activated spliceosome B/catalytic step 1 spliceosome, one of the forms of the spliceosome which has a well-formed active site but still cannot catalyze the branching reaction and is composed at least of 52 proteins, the U2, U5 and U6 snRNAs and the pre-mRNA. Recruited during early steps of activated spliceosome B maturation, it is probably one of the first proteins released from this complex as he matures to the spliceosome C complex. Component of the minor spliceosome, which splices U12-type introns.

The protein localises to the nucleus. In terms of biological role, as part of the spliceosome, plays a role in pre-mRNA splicing. Probable inactive PPIase with no peptidyl-prolyl cis-trans isomerase activity. The chain is Spliceosome-associated protein CWC27 homolog (cwc27) from Danio rerio (Zebrafish).